The sequence spans 456 residues: Cysteine--tRNA ligase (456 aa).

Cysteine 28 contributes to the Zn(2+) binding site. Positions 30-40 (ITVYDHCHLGH) match the 'HIGH' region motif. Residues cysteine 209, histidine 234, and glutamate 238 each coordinate Zn(2+). Positions 266-270 (KMAKS) match the 'KMSKS' region motif. Residue lysine 269 coordinates ATP.

This sequence belongs to the class-I aminoacyl-tRNA synthetase family. In terms of assembly, monomer. The cofactor is Zn(2+).

It localises to the cytoplasm. The enzyme catalyses tRNA(Cys) + L-cysteine + ATP = L-cysteinyl-tRNA(Cys) + AMP + diphosphate. The sequence is that of Cysteine--tRNA ligase from Legionella pneumophila (strain Paris).